The primary structure comprises 138 residues: MTLNLRVMTPNRTVWNSEVQEMILSTNSGQIGVLPNHAPLLTALDIGITKIRLNGQWSTMALMGGFAMVDNNQVTILVNEAEEAAGIDPQEAKETFRIAQTNLARAEGKKQVIEANLAFKRAKARLEAIDATLSYASN.

It belongs to the ATPase epsilon chain family. As to quaternary structure, F-type ATPases have 2 components, CF(1) - the catalytic core - and CF(0) - the membrane proton channel. CF(1) has five subunits: alpha(3), beta(3), gamma(1), delta(1), epsilon(1). CF(0) has three main subunits: a, b and c.

It is found in the plastid. It localises to the chloroplast thylakoid membrane. Functionally, produces ATP from ADP in the presence of a proton gradient across the membrane. This Huperzia lucidula (Shining clubmoss) protein is ATP synthase epsilon chain, chloroplastic.